Reading from the N-terminus, the 152-residue chain is MSEKYIVTWDMLQIHARKLASRLMPSEQWKGIIAVSRGGLVPGALLARELGIRHVDTVCISSYDHDNQRELKVLKRAEGDGEGFIVIDDLVDTGGTAVAIREMYPKAHFVTIFAKPAGRPLVDDYVVDIPQDTWIEQPWDMGVVFVPPISGR.

5-phospho-alpha-D-ribose 1-diphosphate is bound by residues 37–38 (RG), arginine 69, and 88–96 (DDLVDTGGT). Arginine 69 serves as a coordination point for GMP. Aspartate 89 lines the Mg(2+) pocket. Residues aspartate 92 and isoleucine 135 each coordinate guanine. 2 residues coordinate xanthine: aspartate 92 and isoleucine 135. GMP contacts are provided by residues 92 to 96 (DTGGT) and 134 to 135 (WI).

This sequence belongs to the purine/pyrimidine phosphoribosyltransferase family. XGPT subfamily. As to quaternary structure, homotetramer. The cofactor is Mg(2+).

It is found in the cell inner membrane. The catalysed reaction is GMP + diphosphate = guanine + 5-phospho-alpha-D-ribose 1-diphosphate. It carries out the reaction XMP + diphosphate = xanthine + 5-phospho-alpha-D-ribose 1-diphosphate. The enzyme catalyses IMP + diphosphate = hypoxanthine + 5-phospho-alpha-D-ribose 1-diphosphate. The protein operates within purine metabolism; GMP biosynthesis via salvage pathway; GMP from guanine: step 1/1. Its pathway is purine metabolism; XMP biosynthesis via salvage pathway; XMP from xanthine: step 1/1. Purine salvage pathway enzyme that catalyzes the transfer of the ribosyl-5-phosphate group from 5-phospho-alpha-D-ribose 1-diphosphate (PRPP) to the N9 position of the 6-oxopurines guanine and xanthine to form the corresponding ribonucleotides GMP (guanosine 5'-monophosphate) and XMP (xanthosine 5'-monophosphate), with the release of PPi. To a lesser extent, also acts on hypoxanthine. The chain is Xanthine-guanine phosphoribosyltransferase from Shigella boydii serotype 4 (strain Sb227).